Here is an 824-residue protein sequence, read N- to C-terminus: MNRRGGQTAFAAIARNERAIAAFIPYSSHLTDTTLITHGADLVRTWRVQGIAFESAEPELVSQRHEQLNGLWRAISCEQVALWIHCIRRKTQAGLDARYENPFCRALDASYNARLNARQAMTNEFYLTLVYRPGHAALGKRAHHGQAEVRRQLLAHVRRMDEIGSLIETTLRSHGEDHEQAITVLGCETDSAGRRYSRTLTLLEFLLTGHWQPVRVPAGPLDAYLGSSRILAGAEMMELRSPTCRRYAQFIDFKEYGTHTEPGMLNALLYEDYEYVITHSFSAVGKRQALAYLQRQRAQLANVQDAAYSQIDDLAHAEDALVNGDFVIGEYHFSMMILGADPRQLRRDVSSAMTRIQERGFLATPVTLALDAAFYAQLPANWAYRPRKAMLTSRNFAGLCSFHNFYGGKRDGNPWGPALSLLSTPSGQPFYFNFHHSGLDEDCRGQMMLGNTRIIGQSGSGKTVLLNFLLCQLQKFRSADADGLTTIFFDKDRGAEICIRALDGQYLRIRDGEPTGFNPLQLPCTDRNVMFLDSLLAMLARAHDSPLTSAQHATLATAVRTVLRMPASLRRMSTLLQNITQATSEQRELVRRLGRWCRDDGAGGTGMLWWVFDNPNDCLDFSRPGNYGIDGTAFLDNAETRTPISMYLLHRMNEAMDGRRFVYLMDEAWKWIDDPAFAEFAGDQQLTIRKKNGLGVFSTQMPSSLLGARVAASLVQQCATEIYLPNPRADRAEYLDGFKCTETEYQLIRSMAEDSHLFLVKQGRQAVVAQLDLSGMDDELAILSGNARNLRCFEQALALTRERDPNDWIAVFHRLRREASAGLR.

Position 456–463 (456–463) interacts with ATP; it reads GQSGSGKT.

Belongs to the TrbE/VirB4 family.

Its subcellular location is the cell membrane. In Bordetella bronchiseptica (strain ATCC BAA-588 / NCTC 13252 / RB50) (Alcaligenes bronchisepticus), this protein is Type IV secretion system protein PtlC homolog (ptlC).